We begin with the raw amino-acid sequence, 266 residues long: GTP-binding protein Rhes (266 aa).

26-33 (GASRVGKS) lines the GTP pocket. An Effector region motif is present at residues 48 to 56 (YTPTIEDFH). Residues 73 to 77 (DTSGN) and 140 to 143 (NKND) each bind GTP. The segment at 189–235 (MAKLPHEMSPALHHKISVQYGDAFHPRPFCMRRTKVAGAYGMVSPFA) is interaction with GNB1, GNB2 and GNB3. C263 carries the post-translational modification Cysteine methyl ester. C263 carries the S-farnesyl cysteine lipid modification. A propeptide spans 264–266 (SIQ) (removed in mature form).

It belongs to the small GTPase superfamily. RasD family. Monomer (Potential). Interacts with PIK3CA and UBE2I. Interacts with GNB1, GNB2 and GNB3. Post-translationally, farnesylated. Farnesylation is required for membrane targeting. As to expression, highly expressed in brain; prominently in the striatum and weakly in kidney, thyroid, lung, heart and testis. Not expressed in liver. Expressed in pancreatic cell lines and in a embryonic stem cell line.

It is found in the cell membrane. Its function is as follows. GTPase signaling protein that binds to and hydrolyzes GTP. Regulates signaling pathways involving G-proteins-coupled receptor and heterotrimeric proteins such as GNB1, GNB2 and GNB3. May be involved in selected striatal competencies, mainly locomotor activity and motor coordination. This chain is GTP-binding protein Rhes (Rasd2), found in Mus musculus (Mouse).